The following is a 106-amino-acid chain: Cytochrome c oxidase assembly protein COX16 homolog, mitochondrial (106 aa).

The Mitochondrial matrix portion of the chain corresponds to 1–15; it reads MIAPAVLRALRKNKT. A helical transmembrane segment spans residues 16–33; it reads LRYGVPMLLLVVGGSFGL. At 34-106 the chain is on the mitochondrial intermembrane side; that stretch reads REFSQIRYDA…NPETLKPKTT (73 aa). A disordered region spans residues 81–106; it reads IRGPRPWEDPQLLQGRNPETLKPKTT.

Belongs to the COX16 family. As to quaternary structure, associates with the MITRAC complex. Interacts with MT-CO2/COX; specifically interacts with newly synthesized MT-CO2/COX. Interacts with SCO1, SCO2 and COA6.

It localises to the mitochondrion inner membrane. Required for the assembly of the mitochondrial respiratory chain complex IV (CIV), also known as cytochrome c oxidase. Promotes the insertion of copper into the active site of cytochrome c oxidase subunit II (MT-CO2/COX2). Interacts specifically with newly synthesized MT-CO2/COX and its copper center-forming metallochaperones SCO1, SCO2 and COA6. Probably facilitates MT-CO2/COX2 association with the MITRAC assembly intermediate containing MT-CO1/COX1, thereby participating in merging the MT-CO1/COX1 and MT-CO2/COX2 assembly lines. The sequence is that of Cytochrome c oxidase assembly protein COX16 homolog, mitochondrial from Mus musculus (Mouse).